The primary structure comprises 224 residues: Glycerol-3-phosphate acyltransferase (224 aa).

The next 6 helical transmembrane spans lie at 3–23, 54–74, 90–112, 127–147, 152–172, and 183–203; these read IFLS…IGSL, VFGY…VVFA, LYFY…PIYF, LISI…LLLF, VSLS…IPWM, and GFGQ…LIFW.

The protein belongs to the PlsY family. As to quaternary structure, probably interacts with PlsX.

It localises to the cell membrane. The enzyme catalyses an acyl phosphate + sn-glycerol 3-phosphate = a 1-acyl-sn-glycero-3-phosphate + phosphate. The protein operates within lipid metabolism; phospholipid metabolism. In terms of biological role, catalyzes the transfer of an acyl group from acyl-phosphate (acyl-PO(4)) to glycerol-3-phosphate (G3P) to form lysophosphatidic acid (LPA). This enzyme utilizes acyl-phosphate as fatty acyl donor, but not acyl-CoA or acyl-ACP. The protein is Glycerol-3-phosphate acyltransferase of Mycoplasmopsis synoviae (strain 53) (Mycoplasma synoviae).